We begin with the raw amino-acid sequence, 108 residues long: U3-lycotoxin-Ls1w (108 aa).

Positions 1 to 20 (MKFVLLFGVLLVTLFSYSSA) are cleaved as a signal peptide. Residues 21-44 (EMLDDFDQADEDELLSLIEKEEAR) constitute a propeptide that is removed on maturation. 4 cysteine pairs are disulfide-bonded: cysteine 48–cysteine 63, cysteine 55–cysteine 72, cysteine 62–cysteine 87, and cysteine 74–cysteine 85.

The protein belongs to the neurotoxin 19 (CSTX) family. 01 subfamily. As to expression, expressed by the venom gland.

Its subcellular location is the secreted. This is U3-lycotoxin-Ls1w from Lycosa singoriensis (Wolf spider).